The sequence spans 265 residues: HUWE1-associated protein modifying stress responses (265 aa).

Disordered stretches follow at residues methionine 1–serine 22, arginine 145–valine 170, valine 195–glycine 218, and glycine 240–isoleucine 265. Composition is skewed to polar residues over residues valine 156 to valine 170 and valine 195 to threonine 212.

The protein belongs to the TAPR1 family. As to quaternary structure, oligomer.

Its subcellular location is the nucleus. The protein resides in the cytoplasm. Acts as a central player within a network of stress response pathways promoting cellular adaptability. Functions as a negative regulator of TP53/P53 in the cellular response to telomere erosion and probably also DNA damage. The chain is HUWE1-associated protein modifying stress responses from Xenopus laevis (African clawed frog).